A 126-amino-acid chain; its full sequence is DNA-directed RNA polymerase subunit omega (126 aa).

The protein belongs to the RNA polymerase subunit omega family. The RNAP catalytic core consists of 2 alpha, 1 beta, 1 beta' and 1 omega subunit. When a sigma factor is associated with the core the holoenzyme is formed, which can initiate transcription.

The enzyme catalyses RNA(n) + a ribonucleoside 5'-triphosphate = RNA(n+1) + diphosphate. Its function is as follows. Promotes RNA polymerase assembly. Latches the N- and C-terminal regions of the beta' subunit thereby facilitating its interaction with the beta and alpha subunits. The chain is DNA-directed RNA polymerase subunit omega from Paramagnetospirillum magneticum (strain ATCC 700264 / AMB-1) (Magnetospirillum magneticum).